A 217-amino-acid chain; its full sequence is Protein LURP-one-related 15 (217 aa).

N-acetylmethionine is present on Met-1.

Belongs to the LOR family.

Its function is as follows. Might be related to the phospholipid scramblase and tubby-like superfamily of membrane tethered transcription factors. This chain is Protein LURP-one-related 15, found in Arabidopsis thaliana (Mouse-ear cress).